Here is a 342-residue protein sequence, read N- to C-terminus: Ribosomal RNA small subunit methyltransferase C (342 aa).

The protein belongs to the methyltransferase superfamily. RsmC family. Monomer.

The protein resides in the cytoplasm. The enzyme catalyses guanosine(1207) in 16S rRNA + S-adenosyl-L-methionine = N(2)-methylguanosine(1207) in 16S rRNA + S-adenosyl-L-homocysteine + H(+). Its function is as follows. Specifically methylates the guanine in position 1207 of 16S rRNA in the 30S particle. This Shewanella loihica (strain ATCC BAA-1088 / PV-4) protein is Ribosomal RNA small subunit methyltransferase C.